A 215-amino-acid chain; its full sequence is UPF0319 protein VV2_0960 (215 aa).

The first 21 residues, 1–21, serve as a signal peptide directing secretion; it reads MNIIKPLTCILAMSISGLATA.

Belongs to the UPF0319 family.

The polypeptide is UPF0319 protein VV2_0960 (Vibrio vulnificus (strain CMCP6)).